A 3416-amino-acid polypeptide reads, in one-letter code: Genome polyprotein (3416 aa).

A disordered region spans residues 1–34; the sequence is MAKGAVLKGKGGGPPRRVPKETAKKTRQGPGRLP. Over 1–99 the chain is Cytoplasmic; sequence MAKGAVLKGK…NKRRGKRRST (99 aa). A propeptide spans 97-117 (ER anchor for the capsid protein C, removed in mature form by serine protease NS3); it reads RSTTGLLTPILLACLATLVFS. Residues 100 to 120 form a helical membrane-spanning segment; the sequence is TGLLTPILLACLATLVFSATV. Residues 121–243 are Extracellular-facing; it reads RRERTGNMVI…HLTRVEGWVW (123 aa). N145 is a glycosylation site (N-linked (GlcNAc...) asparagine; by host). The chain crosses the membrane as a helical span at residues 244 to 261; that stretch reads KNKFLTAAFCAVVWMVTD. Position 262 (S262) is a topological domain, cytoplasmic. Residues 263–281 form a helical membrane-spanning segment; it reads LPTRFIVITVALCLAPTYA. The Extracellular segment spans residues 282-728; the sequence is TRCTHLQNRD…HTAFGAAFNT (447 aa). 6 disulfide bridges follow: C284-C311, C341-C397, C341-C402, C355-C386, C373-C397, and C373-C402. The interval 379 to 392 is fusion peptide; sequence DRGWGNHCGLFGKG. An N-linked (GlcNAc...) asparagine; by host glycan is attached at N435. Intrachain disulfides connect C467-C571 and C588-C619. The helical transmembrane segment at 729–749 threads the bilayer; sequence IFGGVGFLPRILLGVALAWLG. The Cytoplasmic segment spans residues 750–756; that stretch reads LNSRNPT. A helical membrane pass occupies residues 757-777; sequence LSVGFLITGGLVLTMTLGVGA. Residues 778 to 1134 lie on the Extracellular side of the membrane; the sequence is DMGCAIDANR…RSMVLADNGA (357 aa). Disulfide bonds link C781–C792, C832–C922, C957–C1002, C1059–C1108, C1070–C1092, and C1091–C1095. N-linked (GlcNAc...) asparagine; by host glycans are attached at residues N862, N985, and N1001. The chain crosses the membrane as a helical span at residues 1135–1155; that stretch reads MLSEGGVPGIVAVFVVLELVI. The Lumenal segment spans residues 1156–1164; the sequence is RRRPTTGSS. Residues 1165–1185 form a helical membrane-spanning segment; that stretch reads VVWCGMVVLGLVVTGLVTIEG. Residues 1186 to 1189 lie on the Cytoplasmic side of the membrane; it reads LCRY. The helical transmembrane segment at 1190 to 1210 threads the bilayer; it reads VVAVGILMSMELGPEIVALVL. At 1211–1235 the chain is on the lumenal side; that stretch reads LQAVFDMRTGLLVAFAVKRAYTTRE. A helical membrane pass occupies residues 1236 to 1256; that stretch reads AVATYFLLLVLELGFPEASLS. Topologically, residues 1257-1295 are cytoplasmic; the sequence is NIWKWADSLAMGALILQACGQEGRTRVGYLLAAMMTQKD. The chain crosses the membrane as a helical span at residues 1296–1316; that stretch reads MVIIHTGLTIFLSAATAMAVW. Residues 1317 to 1361 lie on the Lumenal side of the membrane; sequence SMIKGQRDQKGLSWATPLAGLLGGEGVGLRLLAFRKLAERRNRRS. A helical membrane pass occupies residues 1362-1379; that stretch reads FSEPLTVVGVMLTVASGM. Residues 1380-1384 lie on the Cytoplasmic side of the membrane; that stretch reads VRHTS. Residues 1385-1405 traverse the membrane as a helical segment; the sequence is QEALCALVAGAFLLLMMVLGT. Over 1406-1456 the chain is Lumenal; the sequence is RKMQLTAEWCGEVEWNPDLVNEGGEVNLKVRQDAMGNLHLTEVEKEERAMA. Residues 1412 to 1451 form an interacts with and activates NS3 protease region; that stretch reads AEWCGEVEWNPDLVNEGGEVNLKVRQDAMGNLHLTEVEKE. Residues 1457–1477 constitute an intramembrane region (helical); the sequence is LWLLAGLVASAFHWAGILIVL. Topologically, residues 1478 to 2162 are lumenal; the sequence is AVWTLFEMLG…RMAERDAPEA (685 aa). One can recognise a Peptidase S7 domain in the interval 1492–1671; sequence SELVFSGQET…EAEKSRPEIP (180 aa). Active-site charge relay system; for serine protease NS3 activity residues include H1545, D1569, and S1629. One can recognise a Helicase ATP-binding domain in the interval 1677-1833; sequence TGWMSKGQIT…ESNGAIMSEE (157 aa). 1690–1697 provides a ligand contact to ATP; that stretch reads MHPGSGKT. The DEAH box motif lies at 1781 to 1784; the sequence is DEAH. A Helicase C-terminal domain is found at 1844 to 2002; that stretch reads GFDWITEYEG…TLRGPVATFY (159 aa). The residue at position 1885 (K1885) is an N6-acetyllysine; by host. A helical transmembrane segment spans residues 2163-2183; it reads FLTIVEVAVLGVATLGILWCF. Over 2184–2191 the chain is Cytoplasmic; that stretch reads VARASVSR. Residues 2192–2211 constitute an intramembrane region (helical); it reads MFLGTVVLFAALFLLWIGGV. D2212 is a topological domain (lumenal). The chain crosses the membrane as a helical span at residues 2213 to 2233; sequence YGHMAGIALIFYTLLTVLQPE. At 2234–2246 the chain is on the cytoplasmic side; that stretch reads PGKQRSSDDNRLA. A helical membrane pass occupies residues 2247-2267; it reads YFLLGLFSLAGLVTANEMGML. The Lumenal portion of the chain corresponds to 2268–2301; sequence DKTKADLAGLVWRGEQRHPAWEEWTNVDIQPARS. An intramembrane region (helical) is located at residues 2302 to 2322; sequence WGTYVLIVSLFTPYMLHQLQT. Topologically, residues 2323–2345 are lumenal; the sequence is KIQQLVNSSVASGAQAMRDLGGG. Residues 2346-2366 constitute an intramembrane region (helical); that stretch reads TPFFGVAGHVIALGVTSLVGA. The Lumenal portion of the chain corresponds to 2367-2368; that stretch reads TP. The chain crosses the membrane as a helical span at residues 2369–2389; the sequence is MSLGLGVALAAFHLAIVASGL. Over 2390–2432 the chain is Cytoplasmic; sequence EAELTQRAHRVFFSAMVKNPMVDGDVINPFPDGETKPALYERR. A helical membrane pass occupies residues 2433–2453; it reads MSLILAIALCMGSVVLNRTAA. Over 2454 to 2476 the chain is Lumenal; that stretch reads SMTEAGAVGLAALGQLVHPETET. A helical transmembrane segment spans residues 2477 to 2497; that stretch reads LWTMPMACGMAGLVRGSFWGL. Over 2498 to 3416 the chain is Cytoplasmic; the sequence is LPMGHRLWLR…WDLKLESNII (919 aa). The region spanning 2514 to 2778 is the mRNA cap 0-1 NS5-type MT domain; sequence GGAEGETLGD…EVDLGTGTRC (265 aa). S2569 lines the S-adenosyl-L-methionine pocket. Position 2569 is a phosphoserine (S2569). K2574 (for 2'-O-MTase activity) is an active-site residue. S-adenosyl-L-methionine is bound by residues G2599, W2600, T2617, I2618, D2644, and V2645. D2659 acts as the For 2'-O-MTase activity in catalysis. I2660 lines the S-adenosyl-L-methionine pocket. Residues K2696 and E2732 each act as for 2'-O-MTase activity in the active site. An interaction with host SCRIB region spans residues 2732–2736; sequence EMYFS. An S-adenosyl-L-methionine-binding site is contributed by Y2734. Positions 2952, 2956, 2961, and 2964 each coordinate Zn(2+). One can recognise a RdRp catalytic domain in the interval 3042–3191; the sequence is GLFYADDTAG…RPIDDRFGKA (150 aa). Residues H3226, C3242, and C3361 each coordinate Zn(2+).

This sequence in the N-terminal section; belongs to the class I-like SAM-binding methyltransferase superfamily. mRNA cap 0-1 NS5-type methyltransferase family. In terms of assembly, homodimer. Interacts (via N-terminus) with host EXOC1 (via C-terminus); this interaction results in EXOC1 degradation through the proteasome degradation pathway. As to quaternary structure, forms heterodimers with envelope protein E in the endoplasmic reticulum and Golgi. Homodimer; in the endoplasmic reticulum and Golgi. Interacts with protein prM. Interacts with non-structural protein 1. In terms of assembly, homodimer; Homohexamer when secreted. Interacts with envelope protein E. NS1 interacts with NS4B. Interacts with host complement protein CFH; this interaction leads to the degradation of C3. As to quaternary structure, interacts (via N-terminus) with serine protease NS3. Forms a heterodimer with serine protease NS3. May form homooligomers. In terms of assembly, forms a heterodimer with NS2B. Interacts with non-structural protein 2A (via N-terminus). Interacts with NS4B. Interacts with unphosphorylated RNA-directed RNA polymerase NS5; this interaction stimulates RNA-directed RNA polymerase NS5 guanylyltransferase activity. As to quaternary structure, interacts with serine protease NS3. Homodimer. Interacts with host STAT2; this interaction inhibits the phosphorylation of the latter, and, when all viral proteins are present (polyprotein), targets STAT2 for degradation. Interacts with serine protease NS3. Post-translationally, specific enzymatic cleavages in vivo yield mature proteins. Cleavages in the lumen of endoplasmic reticulum are performed by host signal peptidase, whereas cleavages in the cytoplasmic side are performed by serine protease NS3. Signal cleavage at the 2K-4B site requires a prior NS3 protease-mediated cleavage at the 4A-2K site. In terms of processing, cleaved in post-Golgi vesicles by a host furin, releasing the mature small envelope protein M, and peptide pr. This cleavage is incomplete as up to 30% of viral particles still carry uncleaved prM. N-glycosylated. Post-translationally, N-glycosylated. The excreted form is glycosylated and this is required for efficient secretion of the protein from infected cells. In terms of processing, acetylated by host KAT5. Acetylation modulates NS3 RNA-binding and unwinding activities and plays an important positive role for viral replication. Phosphorylated on serines residues. This phosphorylation may trigger NS5 nuclear localization.

It localises to the virion. The protein localises to the host nucleus. Its subcellular location is the host cytoplasm. The protein resides in the host perinuclear region. It is found in the secreted. It localises to the virion membrane. The protein localises to the host endoplasmic reticulum membrane. It catalyses the reaction Selective hydrolysis of -Xaa-Xaa-|-Yaa- bonds in which each of the Xaa can be either Arg or Lys and Yaa can be either Ser or Ala.. The enzyme catalyses RNA(n) + a ribonucleoside 5'-triphosphate = RNA(n+1) + diphosphate. It carries out the reaction a ribonucleoside 5'-triphosphate + H2O = a ribonucleoside 5'-diphosphate + phosphate + H(+). The catalysed reaction is ATP + H2O = ADP + phosphate + H(+). It catalyses the reaction a 5'-end (5'-triphosphoguanosine)-ribonucleoside in mRNA + S-adenosyl-L-methionine = a 5'-end (N(7)-methyl 5'-triphosphoguanosine)-ribonucleoside in mRNA + S-adenosyl-L-homocysteine. The enzyme catalyses a 5'-end (N(7)-methyl 5'-triphosphoguanosine)-ribonucleoside in mRNA + S-adenosyl-L-methionine = a 5'-end (N(7)-methyl 5'-triphosphoguanosine)-(2'-O-methyl-ribonucleoside) in mRNA + S-adenosyl-L-homocysteine + H(+). Plays a role in virus budding by binding to the cell membrane and gathering the viral RNA into a nucleocapsid that forms the core of a mature virus particle. During virus entry, may induce genome penetration into the host cytoplasm after hemifusion induced by the surface proteins. Can migrate to the cell nucleus where it modulates host functions. Functionally, inhibits RNA silencing by interfering with host Dicer. Its function is as follows. Prevents premature fusion activity of envelope proteins in trans-Golgi by binding to envelope protein E at pH6.0. After virion release in extracellular space, gets dissociated from E dimers. In terms of biological role, acts as a chaperone for envelope protein E during intracellular virion assembly by masking and inactivating envelope protein E fusion peptide. prM is the only viral peptide matured by host furin in the trans-Golgi network probably to avoid catastrophic activation of the viral fusion activity in acidic Golgi compartment prior to virion release. prM-E cleavage is inefficient, and many virions are only partially matured. These uncleaved prM would play a role in immune evasion. May play a role in virus budding. Exerts cytotoxic effects by activating a mitochondrial apoptotic pathway through M ectodomain. May display a viroporin activity. Functionally, binds to host cell surface receptor and mediates fusion between viral and cellular membranes. Envelope protein is synthesized in the endoplasmic reticulum in the form of heterodimer with protein prM. They play a role in virion budding in the ER, and the newly formed immature particle is covered with 60 spikes composed of heterodimer between precursor prM and envelope protein E. The virion is transported to the Golgi apparatus where the low pH causes dissociation of PrM-E heterodimers and formation of E homodimers. prM-E cleavage is inefficient, and many virions are only partially matured. These uncleaved prM would play a role in immune evasion. Its function is as follows. Involved in immune evasion, pathogenesis and viral replication. Once cleaved off the polyprotein, is targeted to three destinations: the viral replication cycle, the plasma membrane and the extracellular compartment. Essential for viral replication. Required for formation of the replication complex and recruitment of other non-structural proteins to the ER-derived membrane structures. Excreted as a hexameric lipoparticle that plays a role against host immune response. Antagonizing the complement function. Binds to the host macrophages and dendritic cells. Inhibits signal transduction originating from Toll-like receptor 3 (TLR3). In terms of biological role, component of the viral RNA replication complex that functions in virion assembly and antagonizes the host immune response. Required cofactor for the serine protease function of NS3. May have membrane-destabilizing activity and form viroporins. Functionally, displays three enzymatic activities: serine protease, NTPase and RNA helicase. NS3 serine protease, in association with NS2B, performs its autocleavage and cleaves the polyprotein at dibasic sites in the cytoplasm: C-prM, NS2A-NS2B, NS2B-NS3, NS3-NS4A, NS4A-2K and NS4B-NS5. NS3 RNA helicase binds RNA and unwinds dsRNA in the 3' to 5' direction. Its function is as follows. Regulates the ATPase activity of the NS3 helicase activity. NS4A allows NS3 helicase to conserve energy during unwinding. In terms of biological role, functions as a signal peptide for NS4B and is required for the interferon antagonism activity of the latter. Induces the formation of ER-derived membrane vesicles where the viral replication takes place. Inhibits interferon (IFN)-induced host STAT1 phosphorylation and nuclear translocation, thereby preventing the establishment of cellular antiviral state by blocking the IFN-alpha/beta pathway. Inhibits STAT2 translocation in the nucleus after IFN-alpha treatment. Functionally, replicates the viral (+) and (-) RNA genome, and performs the capping of genomes in the cytoplasm. NS5 methylates viral RNA cap at guanine N-7 and ribose 2'-O positions. Besides its role in RNA genome replication, also prevents the establishment of cellular antiviral state by blocking the interferon-alpha/beta (IFN-alpha/beta) signaling pathway. Inhibits host TYK2 and STAT2 phosphorylation, thereby preventing activation of JAK-STAT signaling pathway. This chain is Genome polyprotein, found in Homo sapiens (Human).